Here is an 89-residue protein sequence, read N- to C-terminus: Acyl carrier protein MbtL (89 aa).

Positions asparagine 8–proline 83 constitute a Carrier domain. O-(pantetheine 4'-phosphoryl)serine is present on serine 43.

In terms of processing, 4'-phosphopantetheine is transferred from CoA to a specific serine of apo-ACP, leading to the activated holo-ACP form.

The protein localises to the cytoplasm. It functions in the pathway siderophore biosynthesis; mycobactin biosynthesis. Acyl carrier protein involved in the formation of acyl-S-ACP intermediates within the mycobactin biosynthesis process. This chain is Acyl carrier protein MbtL (mbtL), found in Mycolicibacterium paratuberculosis (strain ATCC BAA-968 / K-10) (Mycobacterium paratuberculosis).